Consider the following 102-residue polypeptide: Transcription factor UPBEAT1 (102 aa).

The 51-residue stretch at 32–82 (IRPRKSVEASRRPCRAIHRRVKTLKELVPNTKTSEGLDGLFRQTADYILAL) folds into the bHLH domain.

In terms of assembly, homodimer. In terms of tissue distribution, expressed in the root vascular tissue and in root hairs and lateral root caps. Detected at the protein level in all cell files in the elongation zone.

The protein localises to the nucleus. Its function is as follows. Transcription factor that modulates the balance between cellular proliferation and differentiation in root growth. Does not act through cytokinin and auxin signaling, but by repressing peroxidase expression in the elongation zone. This Arabidopsis thaliana (Mouse-ear cress) protein is Transcription factor UPBEAT1 (UPB1).